The chain runs to 235 residues: MKVIKVENQVQGGKVAFEILKEKLANGAQTLGLATGSSPLEFYKEIVESNLDFSNLTSVNLDEYVGLDGDNPQSYRYFMQENLFNQKPFKESFLPRGVKDNAEAEVERYNQILADHPVDLQILGIGRNGHIGFNEPGTPFDSQTHLVELDQSTIEANARFFAKIEDVPTQAISMGIKNILDAKSIILFAYGESKAEAIAGTVSGPVTENLPASSLQNHPDVTIIADAEALSLLEK.

Residue Asp62 is the Proton acceptor; for enolization step of the active site. Asn128 serves as the catalytic For ring-opening step. The active-site Proton acceptor; for ring-opening step is the His130. The For ring-opening step role is filled by Glu135.

Belongs to the glucosamine/galactosamine-6-phosphate isomerase family. NagB subfamily.

The catalysed reaction is alpha-D-glucosamine 6-phosphate + H2O = beta-D-fructose 6-phosphate + NH4(+). The protein operates within amino-sugar metabolism; N-acetylneuraminate degradation; D-fructose 6-phosphate from N-acetylneuraminate: step 5/5. Catalyzes the reversible isomerization-deamination of glucosamine 6-phosphate (GlcN6P) to form fructose 6-phosphate (Fru6P) and ammonium ion. The polypeptide is Glucosamine-6-phosphate deaminase (Streptococcus pneumoniae serotype 2 (strain D39 / NCTC 7466)).